We begin with the raw amino-acid sequence, 196 residues long: 7-methyl-GTP pyrophosphatase (196 aa).

Asp-72 acts as the Proton acceptor in catalysis.

It belongs to the Maf family. YceF subfamily. Requires a divalent metal cation as cofactor.

Its subcellular location is the cytoplasm. The enzyme catalyses N(7)-methyl-GTP + H2O = N(7)-methyl-GMP + diphosphate + H(+). Functionally, nucleoside triphosphate pyrophosphatase that hydrolyzes 7-methyl-GTP (m(7)GTP). May have a dual role in cell division arrest and in preventing the incorporation of modified nucleotides into cellular nucleic acids. This chain is 7-methyl-GTP pyrophosphatase, found in Neisseria meningitidis serogroup B (strain ATCC BAA-335 / MC58).